A 256-amino-acid chain; its full sequence is Protein crossbronx-like (256 aa).

A UBC core domain is found at 17–179; the sequence is NQGYQVLAEY…AKASIVWSWK (163 aa).

The protein belongs to the ubiquitin-conjugating enzyme family. FTS subfamily.

This is Protein crossbronx-like from Drosophila mojavensis (Fruit fly).